The chain runs to 588 residues: Serine/threonine-protein kinase CBK1 (588 aa).

2 disordered regions span residues 1-76 (MTDK…HQQQ) and 100-139 (QHQQQQQQPQQQSVAQQQPSDYVNFTPRPDLLSKTARDRA). Over residues 29–42 (LYQQNSNQSNTSLD) the composition is skewed to polar residues. Composition is skewed to low complexity over residues 43–76 (QQQQFNQQQYNSQQQYQQQQHSQYQQQQQQHQQQ) and 100–117 (QHQQQQQQPQQQSVAQQQ). Positions 207–517 (FVTVKVIGKG…ANEIKSHPFF (311 aa)) constitute a Protein kinase domain. ATP-binding positions include 213 to 221 (IGKGAFGEV) and Lys236. Asp330 (proton acceptor) is an active-site residue. Residues 370–389 (GTSSNPATQMGPPQNTNRQS) form a disordered region. Residues 518 to 586 (RGVDWSSIRE…SRFDNMTRRN (69 aa)) enclose the AGC-kinase C-terminal domain.

The protein belongs to the protein kinase superfamily. STE Ser/Thr protein kinase family. COT1 subfamily.

It catalyses the reaction L-seryl-[protein] + ATP = O-phospho-L-seryl-[protein] + ADP + H(+). It carries out the reaction L-threonyl-[protein] + ATP = O-phospho-L-threonyl-[protein] + ADP + H(+). Its function is as follows. Protein kinase that seems to play a role in the regulation of cell morphogenesis and proliferation. The polypeptide is Serine/threonine-protein kinase CBK1 (CBK1) (Yarrowia lipolytica (strain CLIB 122 / E 150) (Yeast)).